A 329-amino-acid polypeptide reads, in one-letter code: Intradiol ring-cleavage dioxygenase hqdA (329 aa).

Tyrosine 167, tyrosine 201, histidine 225, and histidine 227 together coordinate Fe cation.

Belongs to the intradiol ring-cleavage dioxygenase family. In terms of assembly, homodimer. It depends on Fe(3+) as a cofactor.

It catalyses the reaction catechol + O2 = cis,cis-muconate + 2 H(+). It carries out the reaction benzene-1,2,4-triol + O2 = maleylacetate + 2 H(+). Its function is as follows. Intradiol ring-cleavage dioxygenase involved in an alternative pathway to the protocatechuic acid pathway since it is active on hydroxyquinol and catechol but not on protocatechuic acid. The protein is Intradiol ring-cleavage dioxygenase hqdA of Aspergillus niger (strain ATCC MYA-4892 / CBS 513.88 / FGSC A1513).